The following is a 367-amino-acid chain: Calcium uniporter protein, mitochondrial (367 aa).

The transit peptide at 1 to 12 directs the protein to the mitochondrion; it reads MAMPRVLCRVRL. Residues 13-232 are Mitochondrial matrix-facing; it reads LIHNDFSVIS…LEEKKLELEQ (220 aa). Positions 61–80 are disordered; it reads KQDASSSSSDSDSSDSDEDD. A coiled-coil region spans residues 199–233; it reads REHQLQKEVELTTQLETLQQELLPLEEKKLELEQV. Residues 233–253 traverse the membrane as a helical segment; the sequence is VANRRSNWMAWAGLGLMSVQF. At 254 to 262 the chain is on the mitochondrial intermembrane side; that stretch reads GILARLTWW. Residues 263-284 form a helical membrane-spanning segment; that stretch reads EYSWDIMEPVTYFVTYGTAMAA. Residues 266-276 carry the Selectivity filter motif; the sequence is WDIMEPVTYFV. Glu-270 provides a ligand contact to Ca(2+). The Mitochondrial matrix segment spans residues 285-367; that stretch reads YAYFVLTREE…KKQVEEKAKE (83 aa).

This sequence belongs to the MCU (TC 1.A.77) family. Homotetramer. Component of the uniplex complex, composed of MCU, EMRE, MICU1 and MICU2 in a 4:4:1:1 stoichiometry.

Its subcellular location is the mitochondrion inner membrane. It catalyses the reaction Ca(2+)(in) = Ca(2+)(out). With respect to regulation, MCU channel activity is regulated by the heterodimer composed of MICU1 and MICU2, which act as calcium-sensors. At low calcium levels, MICU1 occludes the pore of the MCU channel, preventing mitochondrial calcium uptake. At higher calcium levels, calcium-binding to MICU1 and MICU2 induces a conformational change that weakens MCU-MICU1 interactions and moves the MICU1-MICU2 heterodimer away from the pore, allowing calcium permeation through the channel. In terms of biological role, channel-forming and calcium-conducting subunit of the mitochondrial inner membrane calcium uniporter complex (uniplex), which mediates calcium uptake into the mitochondrial matrix. MCU channel activity is regulated by the calcium-sensor subunits of the uniplex MICU1 and MICU2. Mitochondrial calcium homeostasis plays key roles in cellular physiology and regulates ATP production, cytoplasmic calcium signals and activation of cell death pathways. The protein is Calcium uniporter protein, mitochondrial of Tribolium castaneum (Red flour beetle).